The sequence spans 308 residues: Ribosomal RNA large subunit methyltransferase F (308 aa).

It belongs to the methyltransferase superfamily. METTL16/RlmF family.

The protein resides in the cytoplasm. The enzyme catalyses adenosine(1618) in 23S rRNA + S-adenosyl-L-methionine = N(6)-methyladenosine(1618) in 23S rRNA + S-adenosyl-L-homocysteine + H(+). Its function is as follows. Specifically methylates the adenine in position 1618 of 23S rRNA. This is Ribosomal RNA large subunit methyltransferase F from Salmonella dublin (strain CT_02021853).